A 1215-amino-acid polypeptide reads, in one-letter code: Metabotropic glycine receptor (1215 aa).

Residues 1 to 23 (MGAMAYPLLLCLLLAQLGLGAVG) form the signal peptide. The tract at residues 23–66 (GASRDPQGRPDSPRERTPKGKPHAQQPGRASASDSSAPWSRSTD) is disordered. The Extracellular segment spans residues 24–417 (ASRDPQGRPD…CFVQEDKYLR (394 aa)). A compositionally biased stretch (basic and acidic residues) spans 28–40 (PQGRPDSPRERTP). Low complexity predominate over residues 52–64 (ASASDSSAPWSRS). Residues 85–281 (YLYTGDSHQL…CENGSYKPGW (197 aa)) are cache-like region. N98 and N143 each carry an N-linked (GlcNAc...) asparagine glycan. C99 and C272 are oxidised to a cystine. Residues S172 and R173 each coordinate glycine. An N-linked (GlcNAc...) asparagine glycan is attached at N215. E271 serves as a coordination point for glycine. An N-linked (GlcNAc...) asparagine glycan is attached at N274. D307 is a glycine binding site. N333 carries an N-linked (GlcNAc...) asparagine glycan. Residues 418–439 (LAIISFQALCMLLDFVSMLVVY) form a helical membrane-spanning segment. Over 440 to 451 (HFRKAKSIRASG) the chain is Cytoplasmic. A helical transmembrane segment spans residues 452–474 (LILLETILFGSLLLYFPVVILYF). Residues 475 to 478 (EPST) are Extracellular-facing. A helical transmembrane segment spans residues 479 to 501 (FRCILLRWARLLGFATVYGTVTL). Residues C481 and C573 are joined by a disulfide bond. At 502–525 (KLHRVLKVFLSRTAQRIPYMTGGR) the chain is on the cytoplasmic side. The chain crosses the membrane as a helical span at residues 526 to 547 (VMRMLAVILLVVFWFLIGWTSS). Residues 548–576 (VCQNLEKQISLIGQGKTSDHLIFNMCLID) are Extracellular-facing. Residues 577–597 (RWDYMTAVAEFLFLLWGVYLC) traverse the membrane as a helical segment. Topologically, residues 598 to 611 (YAVRTVPSAFHEPR) are cytoplasmic. Residues 612–633 (YMAVAVHNELIISAIFHTIRFV) form a helical membrane-spanning segment. At 634–642 (LASRLQSDW) the chain is on the extracellular side. The chain crosses the membrane as a helical span at residues 643 to 664 (MLMLYFAHTHLTVTVTIGLLLI). Over 665-1215 (PKFSHSSNNP…KEEIWDSFKV (551 aa)) the chain is Cytoplasmic. S694, S705, and S708 each carry phosphoserine. The tract at residues 757 to 999 (RITEIPETVS…LNPGTTQMKD (243 aa)) is disordered. Composition is skewed to basic and acidic residues over residues 769-781 (CSKE…DHGT) and 819-828 (STYDHVRDQT). K774 is covalently cross-linked (Glycyl lysine isopeptide (Lys-Gly) (interchain with G-Cter in ubiquitin)). S865 carries the post-translational modification Phosphoserine. Residues 925-943 (VEERTKSQKPLPKDKETNR) show a composition bias toward basic and acidic residues. Position 946 is a phosphoserine (S946). Positions 979-998 (QRVNPTTANSDLNPGTTQMK) are enriched in polar residues. 2 short sequence motifs (VCPWE motif) span residues 1006–1010 (VCPWE) and 1071–1075 (VCLWE). S1080 carries the post-translational modification Phosphoserine. The tract at residues 1117-1164 (SEELPPKAVASKTENENLNQIGHQEKKTSSSEENVRGSYNSSNNFQQP) is disordered. The segment covering 1139–1151 (HQEKKTSSSEENV) has biased composition (basic and acidic residues). The span at 1153–1164 (GSYNSSNNFQQP) shows a compositional bias: polar residues. The VCPWE motif 3 signature appears at 1171 to 1175 (VCPWE).

It belongs to the G-protein coupled receptor 3 family. Homodimer. Associates with the RGS7-GNB5 complex, promoting its localization to the cell membrane and regulating its GTPase activator activity. Interacts (via VCPWE motifs) with GNAO1. Interacts with GPC4. Interacts with EGFLAM.

The protein localises to the cell membrane. It localises to the postsynaptic cell membrane. The protein resides in the presynaptic cell membrane. Its subcellular location is the nucleus. In terms of biological role, metabotropic receptor for glycine that controls synapse formation and function in the brain. Acts as an atypical G-protein coupled receptor that recruits and regulates the RGS7-GNB5 complex instead of activating G proteins. In absence of glycine ligand, promotes the GTPase activator activity of RGS7, increasing the GTPase activity of G protein alpha subunits, thereby driving them into their inactive GDP-bound form. Glycine-binding changes the conformation of the intracellular surface, inhibiting the GTPase activator activity of the RGS7-GNB5 complex, promoting G protein alpha subunits into their active GTP-bound form and regulating cAMP levels. Also able to bind taurine, a compound closely related to glycine, but with a two-fold lower affinity. Glycine receptor-dependent regulation of cAMP controls key ion channels, kinases and neurotrophic factors involved in neuronal excitability and synaptic transmission. Plays a pivotal role in regulating mood and cognition via its ability to regulate neuronal excitability in L2/L3 pyramidal neurons of the prefrontal cortex. Also involved in spatial learning by regulating hippocampal CA1 neuronal excitability. Acts as a synaptic organizer in the hippocampus, required for proper mossy fiber-CA3 neurocircuitry establishment, structure and function: induces presynaptic differentiation in contacting axons via its interaction with GPC4. In addition to glycine, may also act as a receptor for osteocalcin (BGLAP) hormone: osteocalcin-binding initiates a signaling response that prevents neuronal apoptosis in the hippocampus and regulates the synthesis of neurotransmitters. The chain is Metabotropic glycine receptor from Homo sapiens (Human).